Consider the following 283-residue polypeptide: NADPH-dependent 7-cyano-7-deazaguanine reductase (283 aa).

I90–S92 is a binding site for substrate. NADPH is bound at residue S92 to K93. C190 serves as the catalytic Thioimide intermediate. The active-site Proton donor is the D197. H229 to E230 contributes to the substrate binding site. R258 to G259 contacts NADPH.

Belongs to the GTP cyclohydrolase I family. QueF type 2 subfamily. Homodimer.

It localises to the cytoplasm. It carries out the reaction 7-aminomethyl-7-carbaguanine + 2 NADP(+) = 7-cyano-7-deazaguanine + 2 NADPH + 3 H(+). Its pathway is tRNA modification; tRNA-queuosine biosynthesis. Functionally, catalyzes the NADPH-dependent reduction of 7-cyano-7-deazaguanine (preQ0) to 7-aminomethyl-7-deazaguanine (preQ1). The chain is NADPH-dependent 7-cyano-7-deazaguanine reductase from Dechloromonas aromatica (strain RCB).